The following is a 135-amino-acid chain: Ribonuclease P protein component (135 aa).

Belongs to the RnpA family. Consists of a catalytic RNA component (M1 or rnpB) and a protein subunit.

The catalysed reaction is Endonucleolytic cleavage of RNA, removing 5'-extranucleotides from tRNA precursor.. In terms of biological role, RNaseP catalyzes the removal of the 5'-leader sequence from pre-tRNA to produce the mature 5'-terminus. It can also cleave other RNA substrates such as 4.5S RNA. The protein component plays an auxiliary but essential role in vivo by binding to the 5'-leader sequence and broadening the substrate specificity of the ribozyme. The chain is Ribonuclease P protein component from Xylella fastidiosa (strain 9a5c).